The following is a 391-amino-acid chain: MTLSSNQYQLPLNVRPYTTTWCSQSPSCSNLLAIGHDTGITIYCASEEQTPGSTGLTLQELFTIQTGLPTLHLSFSSSCSYSENLHDGDGNVNSSPVYSLFLACVCQDNTVRLIITKNETIITQHVLGGKSGHHNFVNDIDIADVYSADNRLAEQVIASVGDDCTLIIWRLTDEGPILAGYPLSSPGISVQFRPSNPNQLIVGERNGNIRIFDWTLNLSAEENSQTELVKNPWLLTLNTLPLVNTCHSSGIASSLANVRWIGSDGSGILAMCKSGAWLRWNLFANNDYNEISDSTMKLGPKNLLPNVQGISLFPSLLGACPHPRYMDYFATAHSQHGLIQLINTYEKDSNSIPIQLGMPIVDFCWHQDGSHLAIATEGSVLLTRLMGFTRL.

WD repeat units lie at residues 137–179 and 182–222; these read VNDI…PILA and PLSS…SAEE.

It is found in the cytoplasm. Its subcellular location is the nucleus. This is an uncharacterized protein from Schizosaccharomyces pombe (strain 972 / ATCC 24843) (Fission yeast).